Here is a 526-residue protein sequence, read N- to C-terminus: MSFLQEVGKRRTFAIISHPDAGKTTITEKVLLFGNAIQKAGTVKGRGSNQHAKSDWMEMEKERGISVTTSVMQFPFNDCLVNLLDTPGHEDFSEDTYRTLTAVDSCLMVIDAAKGVEDRTRKLMEVTRLRDTPIVTFMNKLDREVRDPMEVLDEVESELGMACAPISWPIGCGKEFKGVYHIHRDETILYESGHGHEIQEVRTIKGLDNPELDAAVGSDLAESVREELELVMGACPEFDHELFLAGELTPVYFGTALGNFGVDHMLEGLTDWAPAPQTRQANERDVVATEDKFSGFVFKIQANMDPKHRDRIAFMRIVSGTYTQGMKMNHVRTGKNVSISDAVTFMAGDRSRAETAYAGDIIGLHNHGTIQIGDTFTQGESLKFSGIPNFAPELFRRIRLKDPLKQKQLLKGLVQLSEEGAVQVFRPLQNNDLIVGAVGVLQFDVVVARLKAEYNVEAIYEGVSVATARWVDCTDGKKMDEFQRKNQANLALDGGDNLTYIAPTMVNLNLASERFPDVQFRATREH.

In terms of domain architecture, tr-type G spans 8–277 (GKRRTFAIIS…GLTDWAPAPQ (270 aa)). GTP is bound by residues 17–24 (SHPDAGKT), 85–89 (DTPGH), and 139–142 (NKLD).

It belongs to the TRAFAC class translation factor GTPase superfamily. Classic translation factor GTPase family. PrfC subfamily.

It localises to the cytoplasm. In terms of biological role, increases the formation of ribosomal termination complexes and stimulates activities of RF-1 and RF-2. It binds guanine nucleotides and has strong preference for UGA stop codons. It may interact directly with the ribosome. The stimulation of RF-1 and RF-2 is significantly reduced by GTP and GDP, but not by GMP. This is Peptide chain release factor 3 from Aliivibrio fischeri (strain MJ11) (Vibrio fischeri).